Reading from the N-terminus, the 223-residue chain is Probable GTP-binding protein EngB (223 aa).

The EngB-type G domain maps to 49–223 (MGVEIAFAGR…LRAALAGLTD (175 aa)). Residues 57–64 (GRSNVGKS), 84–88 (GRTKQ), 102–105 (DMPG), 169–172 (TKAD), and 203–205 (TSS) contribute to the GTP site. Residues serine 64 and threonine 86 each contribute to the Mg(2+) site.

This sequence belongs to the TRAFAC class TrmE-Era-EngA-EngB-Septin-like GTPase superfamily. EngB GTPase family. It depends on Mg(2+) as a cofactor.

Necessary for normal cell division and for the maintenance of normal septation. The chain is Probable GTP-binding protein EngB from Granulibacter bethesdensis (strain ATCC BAA-1260 / CGDNIH1).